The primary structure comprises 99 residues: MAEGNTLISVDYEIFGKVQGVFFRKHTQAEGKKLGLVGWVQNTDRGTVQGQLQGPISKVRHMQEWLETRGSPKSHIDKANFNNEKVILKLDYSDFQIVK.

N-acetylalanine is present on Ala-2. In terms of domain architecture, Acylphosphatase-like spans 9–99 (SVDYEIFGKV…LDYSDFQIVK (91 aa)). Residues Arg-24 and Asn-42 contribute to the active site.

The protein belongs to the acylphosphatase family. Organ-common type isozyme is found in many different tissues.

It carries out the reaction an acyl phosphate + H2O = a carboxylate + phosphate + H(+). The polypeptide is Acylphosphatase-1 (ACYP1) (Homo sapiens (Human)).